Reading from the N-terminus, the 214-residue chain is Vascular endothelial growth factor A (214 aa).

The first 26 residues, 1-26, serve as a signal peptide directing secretion; it reads MNFLLSWVHWTLALLLYLHHAKWSQA. Intrachain disulfides connect Cys-51–Cys-93, Cys-82–Cys-127, and Cys-86–Cys-129. The N-linked (GlcNAc...) asparagine glycan is linked to Asn-100. The span at 131–142 shows a compositional bias: basic and acidic residues; it reads PKKDRTKPEKKS. The tract at residues 131-159 is disordered; sequence PKKDRTKPEKKSVRGKGKGQKRKRKKSRF. Basic residues predominate over residues 143–159; it reads VRGKGKGQKRKRKKSRF.

Belongs to the PDGF/VEGF growth factor family. In terms of assembly, homodimer; disulfide-linked. Also found as heterodimer with PGF. Interacts with NRP1. Interacts with isoform 2 of BSG. Interacts with CD82; this interaction inhibits VEGFA-mediated signaling pathway. In terms of tissue distribution, expressed in the pituitary, in brain, in particularly in supraoptic and paraventricular nuclei and the choroid plexus. Also found abundantly in the corpus luteum of the ovary and in kidney glomeruli. Expressed in the ductal epithelial cells of post-pubertal mammary glands. Expressed in the ductal and alveolar epithelial cells throughout the whole period of gestational evolution, lactation and involution.

The protein resides in the secreted. Its function is as follows. Growth factor active in angiogenesis, vasculogenesis and endothelial cell growth. Induces endothelial cell proliferation, promotes cell migration, inhibits apoptosis and induces permeabilization of blood vessels. Binds to the FLT1/VEGFR1 and KDR/VEGFR2 receptors, heparan sulfate and heparin. May play a role in increasing vascular permeability during lactation, when increased transport of molecules from the blood is required for efficient milk protein synthesis. Binding to NRP1 receptor initiates a signaling pathway needed for motor neuron axon guidance and cell body migration, including for the caudal migration of facial motor neurons from rhombomere 4 to rhombomere 6 during embryonic development. Also binds the DEAR/FBXW7-AS1 receptor. This chain is Vascular endothelial growth factor A (Vegfa), found in Rattus norvegicus (Rat).